Reading from the N-terminus, the 424-residue chain is Dihydroorotase (424 aa).

Positions 60 and 62 each coordinate Zn(2+). Substrate-binding positions include 62-64 and Asn-94; that span reads HFR. Positions 151, 178, and 231 each coordinate Zn(2+). Residue Asn-277 coordinates substrate. Zn(2+) is bound at residue Asp-304. Residue Asp-304 is part of the active site. Residue His-308 participates in substrate binding.

The protein belongs to the metallo-dependent hydrolases superfamily. DHOase family. Class I DHOase subfamily. Zn(2+) serves as cofactor.

The enzyme catalyses (S)-dihydroorotate + H2O = N-carbamoyl-L-aspartate + H(+). It participates in pyrimidine metabolism; UMP biosynthesis via de novo pathway; (S)-dihydroorotate from bicarbonate: step 3/3. In terms of biological role, catalyzes the reversible cyclization of carbamoyl aspartate to dihydroorotate. The sequence is that of Dihydroorotase from Clostridium acetobutylicum (strain ATCC 824 / DSM 792 / JCM 1419 / IAM 19013 / LMG 5710 / NBRC 13948 / NRRL B-527 / VKM B-1787 / 2291 / W).